Here is a 352-residue protein sequence, read N- to C-terminus: Serine protease 55 (352 aa).

The N-terminal stretch at 1–18 (MLLFSVLLLLSLVTGTQL) is a signal peptide. Positions 68–300 (ITGGMEAEVG…YNLWIEKVTQ (233 aa)) constitute a Peptidase S1 domain. A disulfide bridge connects residues C93 and C109. Catalysis depends on charge relay system residues H108 and D156. 3 disulfides stabilise this stretch: C189-C256, C222-C235, and C246-C276. N-linked (GlcNAc...) asparagine glycosylation is present at N240. S250 serves as the catalytic Charge relay system. The disordered stretch occupies residues 308–330 (AEKRRTSVKQKPMGSPVSGVPEP). Over residues 319–330 (PMGSPVSGVPEP) the composition is skewed to low complexity. S325 carries GPI-anchor amidated serine lipidation. A propeptide spans 326 to 352 (GVPEPGSPRSWLLLCPLSHVLFRAILY) (removed in mature form).

Belongs to the peptidase S1 family. In terms of tissue distribution, only detected in testis. Expressed in spermatogonia, spermatocytes, spermatids, Leydig and Sertoli cells. Expressed in prostate cancer and ovarian cancer (at protein level).

The protein resides in the cell membrane. Its subcellular location is the cytoplasm. It localises to the cytosol. Probable serine protease, which plays a crucial role in the fertility of male mice including sperm migration and sperm-egg interaction. This Homo sapiens (Human) protein is Serine protease 55 (PRSS55).